Reading from the N-terminus, the 291-residue chain is Protein/nucleic acid deglycase HchA (291 aa).

Positions 1–18 are enriched in basic and acidic residues; that stretch reads MSNERDTSRTPTPDHAEH. Positions 1–20 are disordered; the sequence is MSNERDTSRTPTPDHAEHNA. Cysteine 188 (nucleophile) is an active-site residue.

It belongs to the peptidase C56 family. HchA subfamily.

It localises to the cytoplasm. The enzyme catalyses N(omega)-(1-hydroxy-2-oxopropyl)-L-arginyl-[protein] + H2O = lactate + L-arginyl-[protein] + H(+). The catalysed reaction is N(6)-(1-hydroxy-2-oxopropyl)-L-lysyl-[protein] + H2O = lactate + L-lysyl-[protein] + H(+). It catalyses the reaction S-(1-hydroxy-2-oxopropyl)-L-cysteinyl-[protein] + H2O = lactate + L-cysteinyl-[protein] + H(+). It carries out the reaction N(omega)-(1-hydroxy-2-oxoethyl)-L-arginyl-[protein] + H2O = L-arginyl-[protein] + glycolate + H(+). The enzyme catalyses N(6)-(1-hydroxy-2-oxoethyl)-L-lysyl-[protein] + H2O = glycolate + L-lysyl-[protein] + H(+). The catalysed reaction is S-(1-hydroxy-2-oxoethyl)-L-cysteinyl-[protein] + H2O = glycolate + L-cysteinyl-[protein] + H(+). It catalyses the reaction N(2)-(1-hydroxy-2-oxopropyl)-dGTP + H2O = lactate + dGTP + H(+). It carries out the reaction N(2)-(1-hydroxy-2-oxopropyl)-GTP + H2O = lactate + GTP + H(+). The enzyme catalyses N(2)-(1-hydroxy-2-oxopropyl)-GDP + H2O = lactate + GDP + H(+). The catalysed reaction is N(2)-(1-hydroxy-2-oxopropyl)-GMP + H2O = lactate + GMP + H(+). It catalyses the reaction N(2)-(1-hydroxy-2-oxoethyl)-dGTP + H2O = dGTP + glycolate + H(+). It carries out the reaction N(2)-(1-hydroxy-2-oxoethyl)-GTP + H2O = glycolate + GTP + H(+). The enzyme catalyses N(2)-(1-hydroxy-2-oxoethyl)-GDP + H2O = glycolate + GDP + H(+). The catalysed reaction is N(2)-(1-hydroxy-2-oxoethyl)-GMP + H2O = glycolate + GMP + H(+). It catalyses the reaction an N(2)-(1-hydroxy-2-oxopropyl)-guanosine in RNA + H2O = a guanosine in RNA + lactate + H(+). It carries out the reaction an N(2)-(1-hydroxy-2-oxopropyl)-2'-deoxyguanosine in DNA + H2O = a 2'-deoxyguanosine in DNA + lactate + H(+). The enzyme catalyses an N(2)-(1-hydroxy-2-oxoethyl)-guanosine in RNA + H2O = a guanosine in RNA + glycolate + H(+). The catalysed reaction is an N(2)-(1-hydroxy-2-oxoethyl)-2'-deoxyguanosine in DNA + H2O = a 2'-deoxyguanosine in DNA + glycolate + H(+). Its function is as follows. Protein and nucleotide deglycase that catalyzes the deglycation of the Maillard adducts formed between amino groups of proteins or nucleotides and reactive carbonyl groups of glyoxals. Thus, functions as a protein deglycase that repairs methylglyoxal- and glyoxal-glycated proteins, and releases repaired proteins and lactate or glycolate, respectively. Deglycates cysteine, arginine and lysine residues in proteins, and thus reactivates these proteins by reversing glycation by glyoxals. Acts on early glycation intermediates (hemithioacetals and aminocarbinols), preventing the formation of Schiff bases and advanced glycation endproducts (AGE). Also functions as a nucleotide deglycase able to repair glycated guanine in the free nucleotide pool (GTP, GDP, GMP, dGTP) and in DNA and RNA. Is thus involved in a major nucleotide repair system named guanine glycation repair (GG repair), dedicated to reversing methylglyoxal and glyoxal damage via nucleotide sanitization and direct nucleic acid repair. Plays an important role in protecting cells from carbonyl stress. The chain is Protein/nucleic acid deglycase HchA from Pseudomonas aeruginosa (strain LESB58).